The primary structure comprises 446 residues: Phosphoglucosamine mutase (446 aa).

S103 functions as the Phosphoserine intermediate in the catalytic mechanism. The Mg(2+) site is built by S103, D242, D244, and D246. S103 carries the post-translational modification Phosphoserine.

This sequence belongs to the phosphohexose mutase family. The cofactor is Mg(2+). Activated by phosphorylation.

The enzyme catalyses alpha-D-glucosamine 1-phosphate = D-glucosamine 6-phosphate. Catalyzes the conversion of glucosamine-6-phosphate to glucosamine-1-phosphate. This chain is Phosphoglucosamine mutase, found in Vibrio vulnificus (strain CMCP6).